Reading from the N-terminus, the 636-residue chain is Topoisomerase I damage affected protein 7 (636 aa).

Residues 1-18 (MNSNSTIGRTTLGESDTI) are compositionally biased toward polar residues. 5 disordered regions span residues 1 to 33 (MNSN…NSRS), 87 to 109 (TLVS…QYDP), 246 to 271 (NKDT…SSTN), 299 to 326 (PTSS…DDTT), and 339 to 362 (QSTT…STSP). Asn4 is a glycosylation site (N-linked (GlcNAc...) asparagine). Composition is skewed to low complexity over residues 19-33 (SLSF…NSRS) and 87-108 (TLVS…SQYD). N-linked (GlcNAc...) asparagine glycosylation occurs at Asn257. A helical transmembrane segment spans residues 457–477 (IVGSVVGSVGGILICVLVVWF). N-linked (GlcNAc...) asparagine glycosylation is present at Asn492. A compositionally biased stretch (polar residues) spans 510 to 541 (QAKEASLQAQDSGSQQRNTETASANNPFSNEF). Residues 510–551 (QAKEASLQAQDSGSQQRNTETASANNPFSNEFNFKARGNPPP) are disordered. Lys512 participates in a covalent cross-link: Glycyl lysine isopeptide (Lys-Gly) (interchain with G-Cter in ubiquitin). N-linked (GlcNAc...) asparagine glycosylation is found at Asn557, Asn562, and Asn626. Ser628 carries the post-translational modification Phosphoserine.

This sequence belongs to the TDA7 family.

It localises to the vacuole membrane. The protein is Topoisomerase I damage affected protein 7 (TDA7) of Saccharomyces cerevisiae (strain ATCC 204508 / S288c) (Baker's yeast).